A 207-amino-acid chain; its full sequence is Large ribosomal subunit protein bL20 (207 aa).

The disordered stretch occupies residues Gln-117–Lys-161. A compositionally biased stretch (basic and acidic residues) spans Ser-140 to Glu-149.

Belongs to the bacterial ribosomal protein bL20 family.

Functionally, binds directly to 23S ribosomal RNA and is necessary for the in vitro assembly process of the 50S ribosomal subunit. It is not involved in the protein synthesizing functions of that subunit. The protein is Large ribosomal subunit protein bL20 of Onion yellows phytoplasma (strain OY-M).